Here is a 121-residue protein sequence, read N- to C-terminus: Protein AC4 (121 aa).

The interval 11 to 30 (RGQSSNPHTSESQERNIQTG) is disordered. The span at 12 to 30 (GQSSNPHTSESQERNIQTG) shows a compositional bias: polar residues.

This sequence belongs to the geminiviridae protein AC4/C4 family.

Its function is as follows. Pathogenicity determinant. May act as a suppressor of RNA-mediated gene silencing, also known as post-transcriptional gene silencing (PTGS), a mechanism of plant viral defense that limits the accumulation of viral RNAs. The chain is Protein AC4 from Cabbage leaf curl virus (isolate Jamaica) (CaLCuV).